A 403-amino-acid chain; its full sequence is Exodeoxyribonuclease 7 large subunit (403 aa).

This sequence belongs to the XseA family. In terms of assembly, heterooligomer composed of large and small subunits.

The protein resides in the cytoplasm. It catalyses the reaction Exonucleolytic cleavage in either 5'- to 3'- or 3'- to 5'-direction to yield nucleoside 5'-phosphates.. Its function is as follows. Bidirectionally degrades single-stranded DNA into large acid-insoluble oligonucleotides, which are then degraded further into small acid-soluble oligonucleotides. The polypeptide is Exodeoxyribonuclease 7 large subunit (Streptomyces griseus subsp. griseus (strain JCM 4626 / CBS 651.72 / NBRC 13350 / KCC S-0626 / ISP 5235)).